The primary structure comprises 659 residues: 3-hydroxypropionyl-coenzyme A synthetase (659 aa).

The active site involves D525. K616 carries the N6-acetyllysine modification.

This sequence belongs to the ATP-dependent AMP-binding enzyme family.

The enzyme catalyses 3-hydroxypropanoate + ATP + CoA = 3-hydroxypropanoyl-CoA + AMP + diphosphate. Plays a role in the autotrophic CO(2) fixation pathway. Activates 3-hydroxypropionate to its CoA ester. Can also activate propionate, and to a lesser extent acrylate, acetate and butyrate. The protein is 3-hydroxypropionyl-coenzyme A synthetase of Sulfurisphaera tokodaii (strain DSM 16993 / JCM 10545 / NBRC 100140 / 7) (Sulfolobus tokodaii).